Reading from the N-terminus, the 134-residue chain is Proline-rich nuclear receptor coactivator 2 (134 aa).

The segment at 1-74 is disordered; the sequence is MGGGERYNIP…NNSNWNASLS (74 aa). Polar residues-rich tracts occupy residues 11 to 24 and 52 to 61; these read DPQS…QQQH and SAVQNGGKTK. Residues 62 to 74 are compositionally biased toward low complexity; it reads SLSNNSNWNASLS. The SH3-binding motif lies at 94–100; that stretch reads SEPPSPS.

This sequence belongs to the PNRC family. PNRC2 subfamily. Interacts with UPF1/RENT1; preferentially interacts with hyperphosphorylated form. Interacts with DCP1A. Interacts with many nuclear receptors including ESR1, ESRRA, ESRRG, NR3C1/GR, NR5A1, PGR, TR, RAR and RXR.

It localises to the nucleus. The protein resides in the cytoplasm. The protein localises to the P-body. Its function is as follows. Involved in nonsense-mediated mRNA decay (NMD) by acting as a bridge between the mRNA decapping complex and the NMD machinery. May act by targeting the NMD machinery to the P-body and recruiting the decapping machinery to aberrant mRNAs. Required for UPF1/RENT1 localization to the P-body. Plays a role in glucocorticoid receptor-mediated mRNA degradation by interacting with the glucocorticoid receptor NR3C1 in a ligand-dependent manner when it is bound to the 5' UTR of target mRNAs and recruiting the RNA helicase UPF1 and the mRNA-decapping enzyme DCP1A, leading to RNA decay. Also acts as a nuclear receptor coactivator. May play a role in controlling the energy balance between energy storage and energy expenditure. This chain is Proline-rich nuclear receptor coactivator 2 (Pnrc2), found in Rattus norvegicus (Rat).